Here is a 127-residue protein sequence, read N- to C-terminus: MMKLVIALCLIGISAAYVVPVYYEIYPEDATFDEADIEPQLSPAELHHGSIRERRSLQPGAPSFPMPGSQLPTSVSGNVEKQGRNTIATIDAQHKTDRYDVRGTWTKVVDGPGRSKPNFRIGGSYRW.

The signal sequence occupies residues 1–15 (MMKLVIALCLIGISA). Residues 16 to 55 (AYVVPVYYEIYPEDATFDEADIEPQLSPAELHHGSIRERR) constitute a propeptide that is removed on maturation. Residues 43 to 84 (PAELHHGSIRERRSLQPGAPSFPMPGSQLPTSVSGNVEKQGR) form a disordered region. The segment covering 45 to 56 (ELHHGSIRERRS) has biased composition (basic and acidic residues). Residues 70–84 (QLPTSVSGNVEKQGR) are compositionally biased toward polar residues.

The protein belongs to the coleoptericin family. In terms of tissue distribution, hemolymph.

It localises to the secreted. Functionally, antibacterial activity against Gram-negative bacteria but not against Gram-positive bacteria. This chain is Holotricin-2, found in Holotrichia diomphalia (Korean black chafer).